The sequence spans 1038 residues: Rap guanine nucleotide exchange factor 1 (1038 aa).

10-140 is an a nucleoside 3',5'-cyclic phosphate binding site; the sequence is RLSPLHTFSD…DILTDETPSD (131 aa). The region spanning 234–316 is the DEP domain; the sequence is TDNHQVIRDI…KTNSYYRWVQ (83 aa). Residue 375 to 492 participates in a nucleoside 3',5'-cyclic phosphate binding; the sequence is ALSHLSTMVK…VRLKDYGEDV (118 aa). The N-terminal Ras-GEF domain occupies 516–654; that stretch reads CGYSVMAGKA…DILTRIGSIR (139 aa). The region spanning 795–1028 is the Ras-GEF domain; the sequence is DSQELAHQLF…MQLSYEIEPK (234 aa).

As to quaternary structure, interacts (via C-terminus) with drn-1. As to expression, expressed specifically in neurons including the nerve ring, ventral and dorsal nerve cord motor neurons and tail ganglia.

Functionally, guanine nucleotide-releasing protein. Together with GTPase drn-1, may regulate acetylcholine release at the neuromuscular junctions probably downstream of G-protein gsa-1 and adenylate cyclase acy-1. This is Rap guanine nucleotide exchange factor 1 (epac-1) from Caenorhabditis elegans.